The primary structure comprises 93 residues: DNA/RNA-binding protein Alba (93 aa).

Lys-11 carries the N6-acetyllysine modification.

It belongs to the histone-like Alba family. Acetylated. Acetylation at Lys-11 decreases DNA-binding affinity.

The protein resides in the cytoplasm. It localises to the chromosome. In terms of biological role, binds double-stranded DNA tightly but without sequence specificity. Involved in DNA compaction. The protein is DNA/RNA-binding protein Alba of Pyrococcus furiosus (strain ATCC 43587 / DSM 3638 / JCM 8422 / Vc1).